A 920-amino-acid chain; its full sequence is Sensor histidine kinase SsrA (920 aa).

Over 1 to 19 the chain is Cytoplasmic; that stretch reads MNLLNLKNTLQTSLVIRLT. The helical transmembrane segment at 20–40 threads the bilayer; it reads FLFLLTTIIIWLLSVLTAAYI. Over 41–291 the chain is Periplasmic; it reads SMVQKRQHII…YGNLHNRILK (251 aa). A helical transmembrane segment spans residues 292 to 312; the sequence is IILQQIPFTLTALVLMTSAFC. The Cytoplasmic portion of the chain corresponds to 313–920; it reads WLLHRSLAKP…RMIFKNYTIT (608 aa). Residues 317 to 369 form the HAMP domain; sequence RSLAKPLWRFVDVINKTATAPLSTRLPAQRLDELDSIAGAFNQLLDTLQVQYD. Residues 354 to 395 are a coiled coil; it reads AGAFNQLLDTLQVQYDNLENKVAERTQALNEAKKRAERANKR. Positions 402–614 constitute a Histidine kinase domain; it reads VISHELRTPM…CVSLVLPLQE (213 aa). Residues histidine 405 and aspartate 549 each contribute to the ATP site. Histidine 405 is subject to Phosphohistidine; by autocatalysis. Positions 690–808 constitute a Response regulatory domain; that stretch reads QILLVDDADI…TLARYISIAA (119 aa). The residue at position 739 (aspartate 739) is a 4-aspartylphosphate.

Post-translationally, autophosphorylated.

It localises to the cell inner membrane. The catalysed reaction is ATP + protein L-histidine = ADP + protein N-phospho-L-histidine.. Member of the two-component regulatory system SsrA/SsrB (SpiR/SsrB) that is required for intracellular proliferation and systemic dissemination within the host. When inside acidic Salmonella-containing vesicles (SCV) within host cells the SsrA sensor kinase autophosphorylates and the phosphoryl group is transferred to the response regulator SsrB; phosphorylated SsrB activates the expression of genes encoding virulence proteins, including pathogenicity island 2 (SPI2) and other horizontally acquired genes, and antagonizes the action of transcriptional repressor hns (H-NS). The sequence is that of Sensor histidine kinase SsrA from Salmonella typhimurium (strain LT2 / SGSC1412 / ATCC 700720).